We begin with the raw amino-acid sequence, 516 residues long: Flavin-dependent halogenase armH2 (516 aa).

Positions 16, 19, and 49 each coordinate FAD. Chloride contacts are provided by Ser328 and Gly329. Ile330 contacts FAD. Positions 440–475 are disordered; the sequence is PQANGNGAAKQDAVPAPIPVALSSGAGPEKDAKRRE.

Belongs to the flavin-dependent halogenase family.

The enzyme catalyses melleolide F + FADH2 + chloride + O2 = 6'-chloromelleolide F + FAD + 2 H2O + H(+). Functionally, flavin-dependent halogenase involved in the biosynthesis of melleolides, a range of antifungal and phytotoxic polyketide derivatives composed of an orsellinic acid (OA) moiety esterified to various sesquiterpene alcohols. The halogenase catalyzes the transfer of a single chlorine atom to the melleolide backbone, resulting in a 6'-chloromelleolide product. The enzyme acts on free substrate and does not depend on carrier-protein-dependent acceptor molecules. The chain is Flavin-dependent halogenase armH2 from Armillaria mellea (Honey mushroom).